A 525-amino-acid polypeptide reads, in one-letter code: Peptide chain release factor 3 (525 aa).

The region spanning 8–276 (AMRRTFAIIS…AFVKEAPPPQ (269 aa)) is the tr-type G domain. GTP is bound by residues 17–24 (SHPDAGKT), 85–89 (DTPGH), and 139–142 (NKMD).

Belongs to the TRAFAC class translation factor GTPase superfamily. Classic translation factor GTPase family. PrfC subfamily.

The protein localises to the cytoplasm. Its function is as follows. Increases the formation of ribosomal termination complexes and stimulates activities of RF-1 and RF-2. It binds guanine nucleotides and has strong preference for UGA stop codons. It may interact directly with the ribosome. The stimulation of RF-1 and RF-2 is significantly reduced by GTP and GDP, but not by GMP. The polypeptide is Peptide chain release factor 3 (Coxiella burnetii (strain RSA 331 / Henzerling II)).